The following is a 326-amino-acid chain: Olfactory receptor 10X1 (326 aa).

Residues 1 to 41 (MVLNVYCCFFQISDIQTMKINQTILKEFILVGFSVYPHVQT) are Extracellular-facing. N-linked (GlcNAc...) asparagine glycosylation is present at Asn21. A helical transmembrane segment spans residues 42–62 (FLFVVFFCLYLLTLAGNLIIM). The Cytoplasmic segment spans residues 63 to 70 (GLTWVDRS). Residues 71–91 (LHTPMYLFLSALSFSETCYTL) form a helical membrane-spanning segment. Over 92-115 (TIVPKMLEDLLAKDRSISVTGCSL) the chain is Extracellular. Cys113 and Cys205 are oxidised to a cystine. Residues 116–136 (QMCFFLGLGGTNCIILTLMGY) form a helical membrane-spanning segment. Residues 137 to 155 (DRFLAICNPLRYPLLMTNI) are Cytoplasmic-facing. The chain crosses the membrane as a helical span at residues 156–176 (VCGQLVASACTAGFFISLTET). Over 177–213 (ALIFRDSFCRPNLVKHFFCHMLAVIRLSCIDSNHTEF) the chain is Extracellular. Asn209 is a glycosylation site (N-linked (GlcNAc...) asparagine). Residues 214-233 (IITLISVSGLLGTLLLIILT) form a helical membrane-spanning segment. Over 234 to 253 (DVFIISTVLRIPSAEGKQKA) the chain is Cytoplasmic. The chain crosses the membrane as a helical span at residues 254–274 (FTTCASHLTVVIIHFGFASIV). The Extracellular segment spans residues 275–284 (YLKPEASGDD). The helical transmembrane segment at 285–305 (TLIAVPYTVITPFLSPIIFSL) threads the bilayer. The Cytoplasmic segment spans residues 306-326 (RNKDMKNAFRRMMGNTVALKK).

It belongs to the G-protein coupled receptor 1 family.

It localises to the cell membrane. Functionally, odorant receptor. This Homo sapiens (Human) protein is Olfactory receptor 10X1 (OR10X1).